The primary structure comprises 374 residues: F-box/LRR-repeat protein 8 (374 aa).

Residues 2–48 (AEPGEQLPEEVLALIFRHLPLPDRAAAARVCRAWAAAATCSAVWHDT) enclose the F-box domain.

Directly interacts with SKP1 and CUL1.

Substrate-recognition component of the SCF (SKP1-CUL1-F-box protein)-type E3 ubiquitin ligase complex. This chain is F-box/LRR-repeat protein 8 (FBXL8), found in Bos taurus (Bovine).